Here is a 238-residue protein sequence, read N- to C-terminus: tRNA (guanine-N(7)-)-methyltransferase (238 aa).

Residues glutamate 68, glutamate 93, aspartate 120, and aspartate 143 each contribute to the S-adenosyl-L-methionine site. The active site involves aspartate 143. Residues lysine 147, aspartate 179, and 216–219 (TKFE) each bind substrate.

It belongs to the class I-like SAM-binding methyltransferase superfamily. TrmB family.

The enzyme catalyses guanosine(46) in tRNA + S-adenosyl-L-methionine = N(7)-methylguanosine(46) in tRNA + S-adenosyl-L-homocysteine. It functions in the pathway tRNA modification; N(7)-methylguanine-tRNA biosynthesis. Functionally, catalyzes the formation of N(7)-methylguanine at position 46 (m7G46) in tRNA. The polypeptide is tRNA (guanine-N(7)-)-methyltransferase (Shewanella frigidimarina (strain NCIMB 400)).